A 113-amino-acid polypeptide reads, in one-letter code: Small ribosomal subunit protein uS15 (113 aa).

The protein belongs to the universal ribosomal protein uS15 family. Part of the 30S ribosomal subunit. Forms a bridge to the 50S subunit in the 70S ribosome, contacting the 23S rRNA.

Functionally, one of the primary rRNA binding proteins, it binds directly to 16S rRNA where it helps nucleate assembly of the platform of the 30S subunit by binding and bridging several RNA helices of the 16S rRNA. In terms of biological role, forms an intersubunit bridge (bridge B4) with the 23S rRNA of the 50S subunit in the ribosome. This is Small ribosomal subunit protein uS15 from Haemophilus influenzae (strain PittEE).